The chain runs to 430 residues: MPYIVDVYAREVLDSRGNPTVEVEVYTESGGFGRALVPSGASTGEYEAVELRDGDKDRYLGKGVLTAVNNVNEIIAPELLGFDVTEQVAIDKMLIELDGTENKGKLGANAILGVSIAVARAAADFLQIPLYQYLGGFNSKTLPVPMMNIVNGGEHADNNVDIQEFMIMPVGAPNFREALRMGAQIFHSLKSVLSAKGLNTAVGDEGGFAPNLGSNEEALQTIVEAIEKAGFKPGEEVKLAMDAASSEFYNKEDGKYHLSGEGVVKTSAEMVDWYEDMVSKYPIISIEDGLDENDWEGHKLLTERLGSKVQLVGDDLFVTNTKKLSEGIKNGVGNSILIKVNQIGTLTETFDAIEMAKRAGYTAVISHRSGETEDSTIADIAVATNAGQIKTGAPSRTDRVAKYNQLLRIEDQLAETAQYHGIETFYNLNK.

Gln-163 contacts (2R)-2-phosphoglycerate. The Proton donor role is filled by Glu-205. Positions 242, 287, and 314 each coordinate Mg(2+). (2R)-2-phosphoglycerate-binding residues include Lys-339, Arg-368, Ser-369, and Lys-390. The active-site Proton acceptor is the Lys-339.

It belongs to the enolase family. Mg(2+) is required as a cofactor.

The protein resides in the cytoplasm. Its subcellular location is the secreted. It localises to the cell surface. It carries out the reaction (2R)-2-phosphoglycerate = phosphoenolpyruvate + H2O. It participates in carbohydrate degradation; glycolysis; pyruvate from D-glyceraldehyde 3-phosphate: step 4/5. Its function is as follows. Catalyzes the reversible conversion of 2-phosphoglycerate (2-PG) into phosphoenolpyruvate (PEP). It is essential for the degradation of carbohydrates via glycolysis. In Bacillus pumilus (strain SAFR-032), this protein is Enolase.